A 435-amino-acid polypeptide reads, in one-letter code: MTDLTPREIVSELDRFIIGQNDAKRAVAVALRNRWRRKQLADDLRDEVYPKNILMIGPTGVGKTEISRRLAKLARAPFLKVEATKFTEVGYVGRDVEQIIRDLVDNAISMTRDHMRDDVKANAHQAAEERVITAIAGEDARESTREMFRKKLKAGDLDDTVIELDVADTSSPFPMMDIPGQPGGNMGMMNLGDIFGKALGGRTTRKKMTVSQSYDILIGEEADKLLDDETVNRAAIEAVEQNGIVFLDEIDKVCAKSDTRGGDVSREGVQRDLLPLIEGTTVSTKHGPIKTDHILFIASGAFHIAKPSDLLPELQGRLPIRVELRALTEEDFVRILTETDNALTLQYTALMGTEEVTVSFTEDGIAALAKIAAEVNQSVENIGARRLYTVMERVFEELSFSAPDRAGEEIIVDAAFVDENLGALAKSTDVSRYVL.

ATP is bound by residues Ile18, 60–65 (GVGKTE), Asp248, Glu313, and Arg385.

Belongs to the ClpX chaperone family. HslU subfamily. As to quaternary structure, a double ring-shaped homohexamer of HslV is capped on each side by a ring-shaped HslU homohexamer. The assembly of the HslU/HslV complex is dependent on binding of ATP.

Its subcellular location is the cytoplasm. Functionally, ATPase subunit of a proteasome-like degradation complex; this subunit has chaperone activity. The binding of ATP and its subsequent hydrolysis by HslU are essential for unfolding of protein substrates subsequently hydrolyzed by HslV. HslU recognizes the N-terminal part of its protein substrates and unfolds these before they are guided to HslV for hydrolysis. In Roseobacter denitrificans (strain ATCC 33942 / OCh 114) (Erythrobacter sp. (strain OCh 114)), this protein is ATP-dependent protease ATPase subunit HslU.